Reading from the N-terminus, the 490-residue chain is MNMDIGKALSDVGGLRDITSRANNSLPPTPDSSPAAPSKKHKLYDFLESRGKIETPRKRIVFEKKPLLHKPVHIQKKPAQLCKELLIRQLGGSRSHPFSTKTSRHVGGRLNLETYYSRPSECLMMLNQLPFCLGFANNESLLAVCTETGALELFDSRFYDRQNEENQPSARRIHGWLAHNNAIFSVNFSKDDSLLATSSGDQTSKVFDLSTQQCITRLGRRGVDGYHSHSVKQVNFCNDSPYNLVSCSRDGSIIFWDMRTHGITIDGEHFQKPVLRIRKAHENSGRDCSITSATWLPQSTSQVISSCSANSALKLWDLRTVHTVRPLPAATTPELTTSKRDFGVTNVCTSPDGERIYAASRDSIIYEYSSRHLNSGFCKTYKDPRLRISSFYVKLACSPDGATLACGGGVQDKTSGVVVFDTTRNCSSSAMLTGGHTKDVTAVDWSSEGQLASISDDGSVRVWNSSLHGSAANLREKNFSEIFYWGFSEK.

Residues 18-40 are disordered; that stretch reads ITSRANNSLPPTPDSSPAAPSKK. 6 WD repeats span residues 178 to 208, 226 to 257, 285 to 317, 339 to 369, 387 to 419, and 435 to 464; these read AHNNAIFSVNFSKDDSLLATSSGDQTSKVFD, YHSHSVKQVNFCNDSPYNLVSCSRDGSIIFWD, GRDCSITSATWLPQSTSQVISSCSANSALKLWD, KRDFGVTNVCTSPDGERIYAASRDSIIYEYS, RISSFYVKLACSPDGATLACGGGVQDKTSGVVV, and GHTKDVTAVDWSSEGQLASISDDGSVRVWN.

Belongs to the WD repeat cdt2 family. In terms of assembly, component of the DCX(DTL) E3 ubiquitin ligase complex, at least composed of cul4, ddb1, cdt2 and pip1.

The protein localises to the nucleus. The protein operates within protein modification; protein ubiquitination. Substrate-specific adapter of a DCX (DDB1-CUL4-X-box) E3 ubiquitin-protein ligase complex required for DNA replication during mitosis and meiosis. The DCX(DTL) complex, also named CRL4(CDT2) complex, mediates the polyubiquitination and subsequent degradation of cdt1 and spd1. Involved in the regulation of mitotic and pre-meiotic S-phase progression. The protein is Cell division cycle protein cdt2 (cdt2) of Schizosaccharomyces pombe (strain 972 / ATCC 24843) (Fission yeast).